The chain runs to 842 residues: Probable cleavage and polyadenylation specificity factor subunit 2 (842 aa).

The segment covering 414-425 (AEETRIRMERAR) has biased composition (basic and acidic residues). Disordered stretches follow at residues 414–442 (AEET…DDIA) and 708–747 (METF…SIPI). Over residues 432–441 (ESDDSDDDDI) the composition is skewed to acidic residues. Polar residues predominate over residues 731 to 747 (SNGQSKENDENASSIPI).

This sequence belongs to the metallo-beta-lactamase superfamily. RNA-metabolizing metallo-beta-lactamase-like family. CPSF2/YSH1 subfamily. In terms of assembly, CPSF is a heterotetramer composed of four distinct subunits 160, 100, 70 and 30 kDa.

The protein localises to the nucleus. Functionally, CPSF plays a key role in pre-mRNA 3'-end formation, recognizing the AAUAAA signal sequence and interacting with poly(A)polymerase and other factors to bring about cleavage and poly(A) addition. The sequence is that of Probable cleavage and polyadenylation specificity factor subunit 2 from Caenorhabditis briggsae.